The chain runs to 470 residues: 5-hydroxytryptamine receptor 2A (470 aa).

The Extracellular segment spans residues M1–L80. The N-linked (GlcNAc...) asparagine glycan is linked to N38. The helical transmembrane segment at T81 to M97 threads the bilayer. The Cytoplasmic segment spans residues A98–Y111. A helical transmembrane segment spans residues F112–Y137. Over G138–K146 the chain is Extracellular. Residues L147 to L171 traverse the membrane as a helical segment. C148 and C227 are disulfide-bonded. D155 serves as a coordination point for serotonin. Positions D172–Y174 match the DRY motif; important for ligand-induced conformation changes motif. Topologically, residues D172–K191 are cytoplasmic. A helical membrane pass occupies residues A192–L215. Over Q216–E232 the chain is Extracellular. A helical membrane pass occupies residues N233–I258. The Cytoplasmic segment spans residues K259–C321. S280 carries the post-translational modification Phosphoserine. Residues K322–I347 form a helical membrane-spanning segment. N342 is a binding site for serotonin. A disulfide bond links C348 and C352. The Extracellular portion of the chain corresponds to C348–D355. The chain crosses the membrane as a helical span at residues V356 to L381. Residues N375 to Y379 carry the NPxxY motif; important for ligand-induced conformation changes and signaling motif. Residues F382–V470 are Cytoplasmic-facing. The segment at Q424–V470 is disordered. The span at D458–V470 shows a compositional bias: polar residues. Positions S468–V470 match the PDZ-binding motif.

It belongs to the G-protein coupled receptor 1 family. In terms of assembly, interacts (via C-terminus) with MPDZ and PATJ. May interact (via C-terminus) with MPP3, PRDX6, DLG4, DLG1, CASK, APBA1 and MAGI2. Interacts with GRM2 and DRD2; this may affect signaling.

It is found in the cell membrane. It localises to the cell projection. The protein localises to the dendrite. The protein resides in the axon. Its subcellular location is the cytoplasmic vesicle. It is found in the membrane. It localises to the caveola. The protein localises to the presynapse. Its activity is regulated as follows. G-protein coupled receptor activity is regulated by lipids: oleamide increases HTR2A-mediated activity. In terms of biological role, G-protein coupled receptor for 5-hydroxytryptamine (serotonin). Also functions as a receptor for various drugs and psychoactive substances, including mescaline, psilocybin, 1-(2,5-dimethoxy-4-iodophenyl)-2-aminopropane (DOI) and lysergic acid diethylamide (LSD). Ligand binding causes a conformation change that triggers signaling via guanine nucleotide-binding proteins (G proteins) and modulates the activity of downstream effectors. HTR2A is coupled to G(q)/G(11) G alpha proteins and activates phospholipase C-beta, releasing diacylglycerol (DAG) and inositol 1,4,5-trisphosphate (IP3) second messengers that modulate the activity of phosphatidylinositol 3-kinase and promote the release of Ca(2+) ions from intracellular stores, respectively. Beta-arrestin family members inhibit signaling via G proteins and mediate activation of alternative signaling pathways. Affects neural activity, perception, cognition and mood. Plays a role in the regulation of behavior, including responses to anxiogenic situations and psychoactive substances. Plays a role in intestinal smooth muscle contraction, and may play a role in arterial vasoconstriction. The protein is 5-hydroxytryptamine receptor 2A (HTR2A) of Bos taurus (Bovine).